A 161-amino-acid chain; its full sequence is Small ribosomal subunit protein uS9 (161 aa).

The protein belongs to the universal ribosomal protein uS9 family.

The protein is Small ribosomal subunit protein uS9 (rpsI) of Rickettsia prowazekii (strain Madrid E).